The primary structure comprises 568 residues: Adenine deaminase (568 aa).

Belongs to the metallo-dependent hydrolases superfamily. Adenine deaminase family. Mn(2+) is required as a cofactor.

The catalysed reaction is adenine + H2O + H(+) = hypoxanthine + NH4(+). The polypeptide is Adenine deaminase (Clostridium perfringens (strain ATCC 13124 / DSM 756 / JCM 1290 / NCIMB 6125 / NCTC 8237 / Type A)).